An 887-amino-acid chain; its full sequence is Phosphatidylinositol 3-kinase catalytic subunit type 3 (887 aa).

Residues 35–184 (YKAVLEDPML…LAKLTKAHRQ (150 aa)) enclose the C2 PI3K-type domain. Residues 149–170 (VEADGSEPTKTPGRTSSTLSED) are disordered. The segment covering 156 to 170 (PTKTPGRTSSTLSED) has biased composition (polar residues). Threonine 163 is modified (phosphothreonine; by AMPK). The residue at position 165 (serine 165) is a Phosphoserine; by AMPK. Phosphoserine occurs at positions 244, 261, and 282. Residues 283-520 (DHDLKPNAAT…PKTHEMYLNV (238 aa)) enclose the PIK helical domain. Residues 447-467 (TSPLPSVSSPPPASKTKEVPD) form a disordered region. A PI3K/PI4K catalytic domain is found at 605–871 (IPETATLFKS…LIDESVHALF (267 aa)). Positions 611 to 617 (LFKSALM) are G-loop. The catalytic loop stretch occupies residues 740-748 (GVGDRHLDN). The tract at residues 759 to 780 (HIDFGYILGRDPKPLPPPMKLN) is activation loop.

Belongs to the PI3/PI4-kinase family. Component of the PI3K (PI3KC3/PI3K-III/class III phosphatidylinositol 3-kinase) complex the core of which is composed of the catalytic subunit PIK3C3, the regulatory subunit PIK3R4 and BECN1 associating with additional regulatory/auxiliary subunits to form alternative complex forms. Alternative complex forms containing a fourth regulatory subunit in a mutually exclusive manner are: the PI3K complex I (PI3KC3-C1) containing ATG14, and the PI3K complex II (PI3KC3-C2) containing UVRAG. PI3KC3-C1 displays a V-shaped architecture with PIK3R4 serving as a bridge between PIK3C3 and the ATG14:BECN1 subcomplex. Both, PI3KC3-C1 and PI3KC3-C2, can associate with further regulatory subunits such as RUBCN, SH3GLB1/Bif-1 and AMBRA1. PI3KC3-C1 probably associates with PIK3CB. Interacts with RAB7A in the presence of PIK3R4. Interacts with AMBRA1. Interacts with BECN1P1/BECN2. Interacts with SLAMF1. May be a component of a complex composed of RAB5A (in GDP-bound form), DYN2 and PIK3C3. Interacts with NCKAP1L. Interacts with ATG14; this interaction is increased in the absence of TMEM39A. Interacts with STEEP1; the interaction is STING1-dependent and required for trafficking of STING1 from the endoplasmic reticulum. Interacts with YWHAG. Interacts with ARMC3. Mn(2+) serves as cofactor. Post-translationally, ubiquitinated via 'Lys-29'- and 'Lys-48'-linked ubiquitination by UBE3C, promoting its degradation. Deubiquitination by ZRANB1/TRABID promotes its stabilization, leading to autophagosome maturation. Ubiquitously expressed, with a highest expression in skeletal muscle.

The protein localises to the midbody. The protein resides in the late endosome. It localises to the cytoplasmic vesicle. It is found in the autophagosome. It carries out the reaction a 1,2-diacyl-sn-glycero-3-phospho-(1D-myo-inositol) + ATP = a 1,2-diacyl-sn-glycero-3-phospho-(1D-myo-inositol-3-phosphate) + ADP + H(+). Functionally, catalytic subunit of the PI3K complex that mediates formation of phosphatidylinositol 3-phosphate; different complex forms are believed to play a role in multiple membrane trafficking pathways: PI3KC3-C1 is involved in initiation of autophagosomes and PI3KC3-C2 in maturation of autophagosomes and endocytosis. As part of PI3KC3-C1, promotes endoplasmic reticulum membrane curvature formation prior to vesicle budding. Involved in regulation of degradative endocytic trafficking and required for the abscission step in cytokinesis, probably in the context of PI3KC3-C2. Involved in the transport of lysosomal enzyme precursors to lysosomes. Required for transport from early to late endosomes. In terms of biological role, (Microbial infection) Kinase activity is required for SARS coronavirus-2/SARS-CoV-2 replication. The sequence is that of Phosphatidylinositol 3-kinase catalytic subunit type 3 from Homo sapiens (Human).